A 386-amino-acid polypeptide reads, in one-letter code: O-methyltransferase 10 (386 aa).

5 residues coordinate S-adenosyl-L-homocysteine: S207, G231, D254, D274, and K288. Residue D254 participates in S-adenosyl-L-methionine binding. H292 (proton acceptor) is an active-site residue.

Belongs to the class I-like SAM-binding methyltransferase superfamily. Cation-independent O-methyltransferase family. As to quaternary structure, homodimer.

The catalysed reaction is dopamine + S-adenosyl-L-methionine = 4-methoxytyramine + S-adenosyl-L-homocysteine + H(+). The enzyme catalyses 3,4-dihydroxy-5-methoxyphenethylamine + S-adenosyl-L-methionine = 3-hydroxy-4,5-dimethoxyphenethylamine + S-adenosyl-L-homocysteine + H(+). It carries out the reaction 3-hydroxy-4,5-dimethoxyphenethylamine + S-adenosyl-L-methionine = mescaline + S-adenosyl-L-homocysteine + H(+). It catalyses the reaction 4-hydroxy-3,5-dimethoxyphenethylamine + S-adenosyl-L-methionine = mescaline + S-adenosyl-L-homocysteine + H(+). It functions in the pathway aromatic compound metabolism. Its pathway is alkaloid biosynthesis. In terms of biological role, O-methyltransferase participating in the biosynthesis of natural products derived from phenylethylamine, including mescaline, a natural hallucinogen potentially used in psychotherapeutic treatments. Catalyzes the O-methylation of mescaline para hydroxyl groups, using dopamine, 3,4-dihydroxy-5-methoxyphenethylamine, 3-hydroxy-4,5-dimethoxyphenethylamine and 4-hydroxy-3,5-dimethoxyphenethylamine as substrates. The protein is O-methyltransferase 10 of Lophophora williamsii (Peyote).